Reading from the N-terminus, the 190-residue chain is Protein GrpE (190 aa).

Residues 1–31 show a composition bias toward basic and acidic residues; the sequence is MTEEQKKYEDAENLESKSENPEEASAEKSEN. A disordered region spans residues 1–39; that stretch reads MTEEQKKYEDAENLESKSENPEEASAEKSENGVEDLQAE.

The protein belongs to the GrpE family. In terms of assembly, homodimer.

It localises to the cytoplasm. In terms of biological role, participates actively in the response to hyperosmotic and heat shock by preventing the aggregation of stress-denatured proteins, in association with DnaK and GrpE. It is the nucleotide exchange factor for DnaK and may function as a thermosensor. Unfolded proteins bind initially to DnaJ; upon interaction with the DnaJ-bound protein, DnaK hydrolyzes its bound ATP, resulting in the formation of a stable complex. GrpE releases ADP from DnaK; ATP binding to DnaK triggers the release of the substrate protein, thus completing the reaction cycle. Several rounds of ATP-dependent interactions between DnaJ, DnaK and GrpE are required for fully efficient folding. This Zymomonas mobilis subsp. mobilis (strain ATCC 31821 / ZM4 / CP4) protein is Protein GrpE.